We begin with the raw amino-acid sequence, 382 residues long: Mannitol-1-phosphate 5-dehydrogenase (382 aa).

3–14 (ALHFGAGNIGRG) contacts NAD(+).

The protein belongs to the mannitol dehydrogenase family.

The catalysed reaction is D-mannitol 1-phosphate + NAD(+) = beta-D-fructose 6-phosphate + NADH + H(+). The sequence is that of Mannitol-1-phosphate 5-dehydrogenase from Tolumonas auensis (strain DSM 9187 / NBRC 110442 / TA 4).